We begin with the raw amino-acid sequence, 259 residues long: Imidazole glycerol phosphate synthase subunit HisF (259 aa).

Catalysis depends on residues Asp11 and Asp130.

It belongs to the HisA/HisF family. Heterodimer of HisH and HisF.

The protein resides in the cytoplasm. The enzyme catalyses 5-[(5-phospho-1-deoxy-D-ribulos-1-ylimino)methylamino]-1-(5-phospho-beta-D-ribosyl)imidazole-4-carboxamide + L-glutamine = D-erythro-1-(imidazol-4-yl)glycerol 3-phosphate + 5-amino-1-(5-phospho-beta-D-ribosyl)imidazole-4-carboxamide + L-glutamate + H(+). It participates in amino-acid biosynthesis; L-histidine biosynthesis; L-histidine from 5-phospho-alpha-D-ribose 1-diphosphate: step 5/9. Its function is as follows. IGPS catalyzes the conversion of PRFAR and glutamine to IGP, AICAR and glutamate. The HisF subunit catalyzes the cyclization activity that produces IGP and AICAR from PRFAR using the ammonia provided by the HisH subunit. The polypeptide is Imidazole glycerol phosphate synthase subunit HisF (Solidesulfovibrio magneticus (strain ATCC 700980 / DSM 13731 / RS-1) (Desulfovibrio magneticus)).